A 342-amino-acid polypeptide reads, in one-letter code: Phosphate acyltransferase (342 aa).

Belongs to the PlsX family. In terms of assembly, homodimer. Probably interacts with PlsY.

Its subcellular location is the cytoplasm. The enzyme catalyses a fatty acyl-[ACP] + phosphate = an acyl phosphate + holo-[ACP]. The protein operates within lipid metabolism; phospholipid metabolism. In terms of biological role, catalyzes the reversible formation of acyl-phosphate (acyl-PO(4)) from acyl-[acyl-carrier-protein] (acyl-ACP). This enzyme utilizes acyl-ACP as fatty acyl donor, but not acyl-CoA. The chain is Phosphate acyltransferase from Shewanella baltica (strain OS155 / ATCC BAA-1091).